We begin with the raw amino-acid sequence, 102 residues long: RNA-binding protein Hfq (102 aa).

One can recognise a Sm domain in the interval 9–68 (DPFLNALRRERVPVSIYLVNGIKLQGQIESFDQFVILLKNTVSQMVYKHAISTVVPSRPV). Positions 63-102 (VPSRPVSHHSNNAGGGTSNNYHHGSNAQGSGAQQDSEETE) are disordered. Over residues 70-96 (HHSNNAGGGTSNNYHHGSNAQGSGAQQ) the composition is skewed to polar residues.

Belongs to the Hfq family. In terms of assembly, homohexamer.

Its function is as follows. RNA chaperone that binds small regulatory RNA (sRNAs) and mRNAs to facilitate mRNA translational regulation in response to envelope stress, environmental stress and changes in metabolite concentrations. Also binds with high specificity to tRNAs. In Salmonella arizonae (strain ATCC BAA-731 / CDC346-86 / RSK2980), this protein is RNA-binding protein Hfq.